Consider the following 518-residue polypeptide: Protein translocase subunit SecD (518 aa).

The next 6 membrane-spanning stretches (helical) occupy residues 9–29, 361–381, 384–404, 406–426, 452–474, and 486–506; these read IFLSIICTVFAVICALPNFMQ, LIGFIAVCIFMVWSYGVLGLF, IALSLALLYILALLSLFQATL, LPGIAGIILTMGMAVDANVLI, FATILDANLTTLIVAFLLYIFGV, and IGIISSMFSAIIITKLLIDIW.

It belongs to the SecD/SecF family. SecD subfamily. Forms a complex with SecF. Part of the essential Sec protein translocation apparatus which comprises SecA, SecYEG and auxiliary proteins SecDF-YajC and YidC.

It localises to the cell inner membrane. In terms of biological role, part of the Sec protein translocase complex. Interacts with the SecYEG preprotein conducting channel. SecDF uses the proton motive force (PMF) to complete protein translocation after the ATP-dependent function of SecA. This is Protein translocase subunit SecD from Rickettsia conorii (strain ATCC VR-613 / Malish 7).